Reading from the N-terminus, the 1450-residue chain is M-protein, striated muscle (1450 aa).

The disordered stretch occupies residues 66–87 (AHEAMQESRKRTHEQKSHASDE). 2 Ig-like C2-type domains span residues 142–233 (PEIL…CAVV) and 254–359 (PLSY…AFLF). Fibronectin type-III domains are found at residues 373–468 (APMD…ALDP), 501–596 (PPTN…PQDI), 602–695 (APGR…VQAA), 698–800 (CPSY…TMPE), and 803–900 (PAYD…ASPG). Ig-like C2-type domains follow at residues 899 to 995 (PGTK…LMTL), 1002 to 1115 (PTIP…FLRK), 1118 to 1204 (PHFS…LELS), 1225 to 1322 (PLKI…QRLK), and 1333 to 1422 (KVIG…VTVS).

As to expression, expressed in pectoralis and cardiac muscle.

Functionally, is a structural constituent of myofibrillar M-band in striated muscle. The sequence is that of M-protein, striated muscle from Gallus gallus (Chicken).